A 725-amino-acid polypeptide reads, in one-letter code: Polyribonucleotide nucleotidyltransferase (725 aa).

The Mg(2+) site is built by D488 and D494. Residues 555–614 form the KH domain; it reads PRMITMKIHPDKIREVIGKGGSTIQALTKETGTTIDIQEDGTITIASTSTDGMAEAKRRI. The region spanning 624–692 is the S1 motif domain; it reads GKIYAGTVLK…EKGRLRLSLK (69 aa). The segment at 702-725 is disordered; the sequence is ISPIAQGDAPAAAPAAPASPDQQQ. A compositionally biased stretch (low complexity) spans 706 to 725; the sequence is AQGDAPAAAPAAPASPDQQQ.

Belongs to the polyribonucleotide nucleotidyltransferase family. The cofactor is Mg(2+).

Its subcellular location is the cytoplasm. The catalysed reaction is RNA(n+1) + phosphate = RNA(n) + a ribonucleoside 5'-diphosphate. Functionally, involved in mRNA degradation. Catalyzes the phosphorolysis of single-stranded polyribonucleotides processively in the 3'- to 5'-direction. This Cupriavidus metallidurans (strain ATCC 43123 / DSM 2839 / NBRC 102507 / CH34) (Ralstonia metallidurans) protein is Polyribonucleotide nucleotidyltransferase.